The chain runs to 89 residues: Small ribosomal subunit protein uS15 (89 aa).

Belongs to the universal ribosomal protein uS15 family. Part of the 30S ribosomal subunit. Forms a bridge to the 50S subunit in the 70S ribosome, contacting the 23S rRNA.

Functionally, one of the primary rRNA binding proteins, it binds directly to 16S rRNA where it helps nucleate assembly of the platform of the 30S subunit by binding and bridging several RNA helices of the 16S rRNA. Its function is as follows. Forms an intersubunit bridge (bridge B4) with the 23S rRNA of the 50S subunit in the ribosome. This is Small ribosomal subunit protein uS15 from Methylobacterium sp. (strain 4-46).